Consider the following 400-residue polypeptide: EARP-interacting protein homolog (400 aa).

The interval 95 to 114 (NNNSNNTNNNDNTNNNTNNN) is disordered. Low complexity predominate over residues 96-114 (NNSNNTNNNDNTNNNTNNN). 3 WD repeats span residues 138–178 (GHTG…NEPT), 227–267 (AHSE…DPVK), and 271–311 (GHNH…SAFN). A compositionally biased stretch (low complexity) spans 314–333 (NNISNSNEQQHSQQPNEQQP). The disordered stretch occupies residues 314-348 (NNISNSNEQQHSQQPNEQQPQQPPQPVKQKKNKRN). The WD 4 repeat unit spans residues 358–397 (EHEDSVYNISWSSSNFLFASLSYDGRFVVNNVPKEYSDIL).

Belongs to the WD repeat EIPR1 family.

The chain is EARP-interacting protein homolog from Dictyostelium discoideum (Social amoeba).